Consider the following 194-residue polypeptide: UPF0232 protein in recF-gyrB intergenic region (194 aa).

Residues M1–A14 show a composition bias toward acidic residues. Residues M1 to Q81 are disordered. Over residues D30 to R52 the composition is skewed to basic and acidic residues.

The protein belongs to the UPF0232 family.

The chain is UPF0232 protein in recF-gyrB intergenic region from Mycolicibacterium smegmatis (Mycobacterium smegmatis).